The following is a 154-amino-acid chain: Ribonuclease H (154 aa).

Residues 1–142 (MRKQVEIFTD…CDELARAAAG (142 aa)) enclose the RNase H type-1 domain. 4 residues coordinate Mg(2+): D10, E48, D70, and D134.

It belongs to the RNase H family. Monomer. Mg(2+) is required as a cofactor.

Its subcellular location is the cytoplasm. It carries out the reaction Endonucleolytic cleavage to 5'-phosphomonoester.. Endonuclease that specifically degrades the RNA of RNA-DNA hybrids. The protein is Ribonuclease H of Pectobacterium carotovorum subsp. carotovorum (strain PC1).